The sequence spans 542 residues: CTP synthase (542 aa).

The interval 1 to 265 is amidoligase domain; sequence MTKYIFVTGG…LKPISKELSL (265 aa). Residue Ser-13 participates in CTP binding. A UTP-binding site is contributed by Ser-13. Residues 14–19 and Asp-71 each bind ATP; that span reads SLGKGI. Residues Asp-71 and Glu-139 each contribute to the Mg(2+) site. CTP contacts are provided by residues 146–148, 186–191, and Lys-222; these read DIE and KSKPTQ. UTP-binding positions include 186-191 and Lys-222; that span reads KSKPTQ. Residues 290 to 541 enclose the Glutamine amidotransferase type-1 domain; the sequence is VLGFVGKYLE…VEATLAISQE (252 aa). Gly-352 provides a ligand contact to L-glutamine. Cys-379 acts as the Nucleophile; for glutamine hydrolysis in catalysis. L-glutamine contacts are provided by residues 380-383, Glu-403, and Arg-471; that span reads LGMQ. Catalysis depends on residues His-514 and Glu-516.

It belongs to the CTP synthase family. As to quaternary structure, homotetramer.

The catalysed reaction is UTP + L-glutamine + ATP + H2O = CTP + L-glutamate + ADP + phosphate + 2 H(+). It catalyses the reaction L-glutamine + H2O = L-glutamate + NH4(+). The enzyme catalyses UTP + NH4(+) + ATP = CTP + ADP + phosphate + 2 H(+). It participates in pyrimidine metabolism; CTP biosynthesis via de novo pathway; CTP from UDP: step 2/2. With respect to regulation, allosterically activated by GTP, when glutamine is the substrate; GTP has no effect on the reaction when ammonia is the substrate. The allosteric effector GTP functions by stabilizing the protein conformation that binds the tetrahedral intermediate(s) formed during glutamine hydrolysis. Inhibited by the product CTP, via allosteric rather than competitive inhibition. Catalyzes the ATP-dependent amination of UTP to CTP with either L-glutamine or ammonia as the source of nitrogen. Regulates intracellular CTP levels through interactions with the four ribonucleotide triphosphates. The chain is CTP synthase from Sulfurimonas denitrificans (strain ATCC 33889 / DSM 1251) (Thiomicrospira denitrificans (strain ATCC 33889 / DSM 1251)).